We begin with the raw amino-acid sequence, 842 residues long: Pentatricopeptide repeat-containing protein At3g23020 (842 aa).

The disordered stretch occupies residues 40–61 (YVPGTHESDKGPQRSTRNGDRG). The segment covering 45–59 (HESDKGPQRSTRNGD) has biased composition (basic and acidic residues). PPR repeat units follow at residues 186 to 220 (NVIH…GIKP), 221 to 255 (INST…GMQP), 256 to 290 (DEVT…ENKA), 297 to 331 (SSYT…GIVP), 332 to 362 (TTVT…MKLH), 366 to 400 (DTRT…GLKP), 401 to 435 (DPVS…NVEI), 436 to 470 (DEYT…GNMS), 474 to 500 (YSAN…CQEV), 504 to 538 (TVIE…GVTP), 539 to 573 (DKCT…GYVS), 574 to 608 (DCIP…NIEP), 609 to 643 (DVVV…GIPG), 644 to 674 (NSVI…LLQS), 682 to 712 (DVYT…MKQR), 716 to 750 (NEFT…KILT), 751 to 785 (DPLS…GIQP), and 786 to 820 (DDST…EIKR).

Belongs to the PPR family. P subfamily.

The polypeptide is Pentatricopeptide repeat-containing protein At3g23020 (Arabidopsis thaliana (Mouse-ear cress)).